Here is a 212-residue protein sequence, read N- to C-terminus: Transmembrane emp24 domain-containing protein p24delta4 (212 aa).

The signal sequence occupies residues 1-25 (MKKKMIPTTILLSALIFSLSPICEA). The Lumenal portion of the chain corresponds to 26-179 (VWLTVPHTGS…RIVSEKTNSR (154 aa)). The 113-residue stretch at 35–147 (SKCVSEEIQS…IEGVELEFKK (113 aa)) folds into the GOLD domain. The N-linked (GlcNAc...) asparagine glycan is linked to asparagine 82. Positions 133–155 (ARKEKIEGVELEFKKLEGAVEAI) form a coiled coil. Residues arginine 165 and arginine 170 each carry the omega-N-methylated arginine modification. Residues 180 to 200 (VAWYSIMSLGICIVVSGLQIL) form a helical membrane-spanning segment. Over 201–212 (YLKQYFEKKKLI) the chain is Cytoplasmic. Positions 205 to 206 (YF) match the COPII vesicle coat-binding motif. The COPI vesicle coat-binding motif lies at 205–212 (YFEKKKLI).

The protein belongs to the EMP24/GP25L family. In terms of assembly, probably oligomerizes with other members of the EMP24/GP25L family. Associates with the COPI vesicle coat (coatomer). Associates with the COPII vesicle coat (coatomer).

It localises to the endoplasmic reticulum membrane. It is found in the golgi apparatus membrane. Functionally, involved in vesicular protein trafficking. Mainly functions in the early secretory pathway. Required for trafficking GLL23, a component of the PYK10 complex. May act as a receptor facilitating its packing into COPII carriers and export from the endoplasmic reticulum. The chain is Transmembrane emp24 domain-containing protein p24delta4 (CYB) from Arabidopsis thaliana (Mouse-ear cress).